We begin with the raw amino-acid sequence, 357 residues long: Serpentine receptor class epsilon-30 (357 aa).

Transmembrane regions (helical) follow at residues 31–51 (IFELSSCILCGYILNLSIFVM), 61–81 (LMFLTVPLFAIWHELIIGKFI), 121–141 (LLIFGGFLQWHTIYSIVFGIL), 165–185 (IPIILTIISQLLSISISLAII), 192–212 (FLARLPFVICAPLSVLVFLFI), 253–273 (LVVVVIFYISICGFGIAALTF), and 283–303 (LIENFLFLHPYPICLTAMFSI).

It belongs to the nematode receptor-like protein sre family.

The protein localises to the membrane. The chain is Serpentine receptor class epsilon-30 (sre-30) from Caenorhabditis elegans.